Reading from the N-terminus, the 93-residue chain is Large ribosomal subunit protein uL23c (93 aa).

Belongs to the universal ribosomal protein uL23 family. Part of the 50S ribosomal subunit.

Its subcellular location is the plastid. The protein resides in the chloroplast. Its function is as follows. Binds to 23S rRNA. The sequence is that of Large ribosomal subunit protein uL23c (rpl23) from Adiantum capillus-veneris (Maidenhair fern).